Reading from the N-terminus, the 130-residue chain is Phosphoribosyl-AMP cyclohydrolase (130 aa).

Aspartate 77 is a Mg(2+) binding site. Cysteine 78 is a Zn(2+) binding site. 2 residues coordinate Mg(2+): aspartate 79 and aspartate 81. Zn(2+) contacts are provided by cysteine 95 and cysteine 102.

It belongs to the PRA-CH family. Homodimer. Mg(2+) is required as a cofactor. Zn(2+) serves as cofactor.

It is found in the cytoplasm. It catalyses the reaction 1-(5-phospho-beta-D-ribosyl)-5'-AMP + H2O = 1-(5-phospho-beta-D-ribosyl)-5-[(5-phospho-beta-D-ribosylamino)methylideneamino]imidazole-4-carboxamide. It functions in the pathway amino-acid biosynthesis; L-histidine biosynthesis; L-histidine from 5-phospho-alpha-D-ribose 1-diphosphate: step 3/9. Functionally, catalyzes the hydrolysis of the adenine ring of phosphoribosyl-AMP. The protein is Phosphoribosyl-AMP cyclohydrolase of Pseudomonas savastanoi pv. phaseolicola (strain 1448A / Race 6) (Pseudomonas syringae pv. phaseolicola (strain 1448A / Race 6)).